Consider the following 333-residue polypeptide: MSKFYDVIKPKASRPPVWFLRQVGRYMPQYRELKGSQTLKDFFHNTEAITEATLLGPSLLKVDAAILFADILSLLDGFNISYDFAPGPQISFSPKEELIFTNDPQDTFSYLLKAIKNLVKRLSVPLIAFAASPFTMACYLLEGGASKDFPKTMAFLYQHPERFDALLKQLAEATVIYLKEQIQAGASAIQLFESSSLRLPSALFSRYVTRPNTQLITQLKNSVSSPISLFCRCFDENFIDLYSTGADTLHPDYHVNLSQIYTAVTHPGSLQGNIDPALFLLPQDQFLNHLEKYLSVLKHQPKYIFNSGHGILPETPLENVQAAVLCLTSISTS.

Substrate is bound by residues 21-25 (RQVGR), Asp-70, Tyr-139, Ser-194, and His-309.

It belongs to the uroporphyrinogen decarboxylase family. As to quaternary structure, homodimer.

The protein resides in the cytoplasm. The catalysed reaction is uroporphyrinogen III + 4 H(+) = coproporphyrinogen III + 4 CO2. The protein operates within porphyrin-containing compound metabolism; protoporphyrin-IX biosynthesis; coproporphyrinogen-III from 5-aminolevulinate: step 4/4. Catalyzes the decarboxylation of four acetate groups of uroporphyrinogen-III to yield coproporphyrinogen-III. The polypeptide is Uroporphyrinogen decarboxylase (Chlamydia abortus (strain DSM 27085 / S26/3) (Chlamydophila abortus)).